Reading from the N-terminus, the 291-residue chain is N-acetylmannosamine kinase (291 aa).

ATP contacts are provided by residues 5-12 (AIDIGGTK) and 132-139 (GVGGGVVS). The Zn(2+) site is built by histidine 156, cysteine 166, cysteine 168, and cysteine 173.

Belongs to the ROK (NagC/XylR) family. NanK subfamily. As to quaternary structure, homodimer.

It catalyses the reaction an N-acyl-D-mannosamine + ATP = an N-acyl-D-mannosamine 6-phosphate + ADP + H(+). Its pathway is amino-sugar metabolism; N-acetylneuraminate degradation; D-fructose 6-phosphate from N-acetylneuraminate: step 2/5. In terms of biological role, catalyzes the phosphorylation of N-acetylmannosamine (ManNAc) to ManNAc-6-P. The sequence is that of N-acetylmannosamine kinase from Escherichia coli O139:H28 (strain E24377A / ETEC).